We begin with the raw amino-acid sequence, 689 residues long: DNA ligase (689 aa).

NAD(+)-binding positions include 32 to 36 (DAEYD), 81 to 82 (SL), and Glu113. Lys115 functions as the N6-AMP-lysine intermediate in the catalytic mechanism. NAD(+) is bound by residues Arg136, Glu176, Lys306, and Lys330. The Zn(2+) site is built by Cys424, Cys427, Cys442, and Cys448. One can recognise a BRCT domain in the interval 606 to 689 (AEELPLAEQI…ALLAEHGITI (84 aa)).

This sequence belongs to the NAD-dependent DNA ligase family. LigA subfamily. Mg(2+) is required as a cofactor. Requires Mn(2+) as cofactor.

It carries out the reaction NAD(+) + (deoxyribonucleotide)n-3'-hydroxyl + 5'-phospho-(deoxyribonucleotide)m = (deoxyribonucleotide)n+m + AMP + beta-nicotinamide D-nucleotide.. DNA ligase that catalyzes the formation of phosphodiester linkages between 5'-phosphoryl and 3'-hydroxyl groups in double-stranded DNA using NAD as a coenzyme and as the energy source for the reaction. It is essential for DNA replication and repair of damaged DNA. The polypeptide is DNA ligase (Colwellia psychrerythraea (strain 34H / ATCC BAA-681) (Vibrio psychroerythus)).